The following is a 267-amino-acid chain: Urease accessory protein UreD 2 (267 aa).

It belongs to the UreD family. UreD, UreF and UreG form a complex that acts as a GTP-hydrolysis-dependent molecular chaperone, activating the urease apoprotein by helping to assemble the nickel containing metallocenter of UreC. The UreE protein probably delivers the nickel.

It localises to the cytoplasm. Functionally, required for maturation of urease via the functional incorporation of the urease nickel metallocenter. This Synechococcus sp. (strain JA-3-3Ab) (Cyanobacteria bacterium Yellowstone A-Prime) protein is Urease accessory protein UreD 2.